The following is a 52-amino-acid chain: uncharacterized protein (52 aa).

This is an uncharacterized protein from Thermoproteus tenax (TTV1).